A 688-amino-acid chain; its full sequence is Methionine--tRNA ligase (688 aa).

Residues 13–23 (PYANGNFHIGH) carry the 'HIGH' region motif. 4 residues coordinate Zn(2+): cysteine 144, cysteine 147, cysteine 157, and cysteine 160. The 'KMSKS' region signature appears at 342 to 346 (KMSKS). ATP is bound at residue lysine 345. One can recognise a tRNA-binding domain in the interval 582–688 (DFAKVDLRIA…PGAQPGMRIH (107 aa)).

This sequence belongs to the class-I aminoacyl-tRNA synthetase family. MetG type 1 subfamily. In terms of assembly, homodimer. Zn(2+) is required as a cofactor.

It localises to the cytoplasm. It catalyses the reaction tRNA(Met) + L-methionine + ATP = L-methionyl-tRNA(Met) + AMP + diphosphate. Functionally, is required not only for elongation of protein synthesis but also for the initiation of all mRNA translation through initiator tRNA(fMet) aminoacylation. The protein is Methionine--tRNA ligase of Acidovorax ebreus (strain TPSY) (Diaphorobacter sp. (strain TPSY)).